We begin with the raw amino-acid sequence, 91 residues long: Small ribosomal subunit protein uS15 (91 aa).

Belongs to the universal ribosomal protein uS15 family. As to quaternary structure, part of the 30S ribosomal subunit. Forms a bridge to the 50S subunit in the 70S ribosome, contacting the 23S rRNA.

Its function is as follows. One of the primary rRNA binding proteins, it binds directly to 16S rRNA where it helps nucleate assembly of the platform of the 30S subunit by binding and bridging several RNA helices of the 16S rRNA. Functionally, forms an intersubunit bridge (bridge B4) with the 23S rRNA of the 50S subunit in the ribosome. This Rickettsia akari (strain Hartford) protein is Small ribosomal subunit protein uS15.